Reading from the N-terminus, the 138-residue chain is Putative membrane protein insertion efficiency factor (138 aa).

Positions 71–138 (YDPVPGTPEA…GTPSHTRGEN (68 aa)) are disordered. A compositionally biased stretch (basic and acidic residues) spans 81–113 (RQWRELHPETARSKNEPIHDLTDDNPRDHEPAL). Residues 123 to 138 (PGSTHTGTPSHTRGEN) are compositionally biased toward polar residues.

Belongs to the UPF0161 family.

It localises to the cell membrane. In terms of biological role, could be involved in insertion of integral membrane proteins into the membrane. This is Putative membrane protein insertion efficiency factor from Cutibacterium acnes (strain DSM 16379 / KPA171202) (Propionibacterium acnes).